A 320-amino-acid chain; its full sequence is Very-long-chain 3-oxoacyl-CoA reductase (320 aa).

The chain crosses the membrane as a helical span at residues 17–37 (FWYLGVVAAVWWGLRAAWCLL). 56-85 (GKWAVVTGATDGIGKAYAEELAKRGMNIVL) provides a ligand contact to NADP(+). 2 consecutive transmembrane segments (helical) span residues 189–209 (GVIL…LTVY) and 283–303 (AIMG…SLGM). Substrate is bound at residue Ser-196. Tyr-209 acts as the Proton acceptor in catalysis.

The protein belongs to the short-chain dehydrogenases/reductases (SDR) family. 17-beta-HSD 3 subfamily.

It localises to the endoplasmic reticulum membrane. It catalyses the reaction a very-long-chain (3R)-3-hydroxyacyl-CoA + NADP(+) = a very-long-chain 3-oxoacyl-CoA + NADPH + H(+). The catalysed reaction is 17beta-estradiol + NAD(+) = estrone + NADH + H(+). The enzyme catalyses 17beta-estradiol + NADP(+) = estrone + NADPH + H(+). It carries out the reaction 3-oxooctadecanoyl-CoA + NADPH + H(+) = (3R)-hydroxyoctadecanoyl-CoA + NADP(+). It catalyses the reaction (7Z,10Z,13Z,16Z)-3-oxodocosatetraenoyl-CoA + NADPH + H(+) = (3R)-hydroxy-(7Z,10Z,13Z,16Z)-docosatetraenoyl-CoA + NADP(+). The catalysed reaction is 3-oxo-(7Z,10Z,13Z,16Z,19Z)-docosapentaenoyl-CoA + NADPH + H(+) = (3R)-hydroxy-(7Z,10Z,13Z,16Z,19Z)-docosapentaenoyl-CoA + NADP(+). The enzyme catalyses (8Z,11Z,14Z)-3-oxoeicosatrienoyl-CoA + NADPH + H(+) = (3R)-hydroxy-(8Z,11Z,14Z)-eicosatrienoyl-CoA + NADP(+). The protein operates within lipid metabolism; fatty acid biosynthesis. It functions in the pathway steroid biosynthesis; estrogen biosynthesis. Its function is as follows. Catalyzes the second of the four reactions of the long-chain fatty acids elongation cycle. This endoplasmic reticulum-bound enzymatic process, allows the addition of two carbons to the chain of long- and very long-chain fatty acids/VLCFAs per cycle. This enzyme has a 3-ketoacyl-CoA reductase activity, reducing 3-ketoacyl-CoA to 3-hydroxyacyl-CoA, within each cycle of fatty acid elongation. Thereby, it may participate in the production of VLCFAs of different chain lengths that are involved in multiple biological processes as precursors of membrane lipids and lipid mediators. May also catalyze the transformation of estrone (E1) into estradiol (E2) and play a role in estrogen formation. The polypeptide is Very-long-chain 3-oxoacyl-CoA reductase (hsd17b12) (Xenopus tropicalis (Western clawed frog)).